The sequence spans 482 residues: UDP-N-acetylmuramate--L-alanine ligase (482 aa).

Position 123–129 (123–129) interacts with ATP; it reads GTHGKTT.

It belongs to the MurCDEF family.

The protein resides in the cytoplasm. The catalysed reaction is UDP-N-acetyl-alpha-D-muramate + L-alanine + ATP = UDP-N-acetyl-alpha-D-muramoyl-L-alanine + ADP + phosphate + H(+). The protein operates within cell wall biogenesis; peptidoglycan biosynthesis. Its function is as follows. Cell wall formation. The chain is UDP-N-acetylmuramate--L-alanine ligase from Pseudomonas putida (strain GB-1).